We begin with the raw amino-acid sequence, 1067 residues long: Probable importin-5 homolog (1067 aa).

HEAT repeat units follow at residues 3-34 (LQPI…YKNH), 42-75 (SFIV…SGNI), 93-120 (FAVR…QLVP), 125-152 (PEIL…LIGA), 164-197 (APHF…STFI), 206-243 (VFKP…IAQY), 251-286 (NFDM…FAEF), 295-347 (LYLE…HCVS), 349-381 (GLWE…SSIS), 385-425 (EKQI…ASYL), 427-466 (REMQ…LDEI), 468-508 (PNRV…VDGI), 510-553 (EEFT…GLAV), 555-596 (KKVF…AQCL), 598-658 (EDFI…AMEL), 661-703 (HLFP…SKQH), 718-757 (FTSR…MDIG), 763-826 (ADRI…CIQF), 832-869 (PYIA…ENGG), 876-909 (YPHI…AAEN), 917-960 (FLME…ITNL), 969-999 (PQTI…TLIR), 1008-1040 (QQYI…LALR), and 1041-1064 (SQES…LANF).

It belongs to the importin beta family. Importin beta-3 subfamily.

Its subcellular location is the cytoplasm. The protein localises to the nucleus. Functionally, functions in nuclear protein import as nuclear transport receptor. Serves as receptor for nuclear localization signals (NLS) in cargo substrates. The protein is Probable importin-5 homolog of Dictyostelium discoideum (Social amoeba).